A 368-amino-acid polypeptide reads, in one-letter code: Phosphoserine aminotransferase (368 aa).

R44 is an L-glutamate binding site. Residues 78-79 (AT), W104, T157, D179, and Q202 contribute to the pyridoxal 5'-phosphate site. N6-(pyridoxal phosphate)lysine is present on K203. Pyridoxal 5'-phosphate is bound at residue 244–245 (NT).

The protein belongs to the class-V pyridoxal-phosphate-dependent aminotransferase family. SerC subfamily. Homodimer. It depends on pyridoxal 5'-phosphate as a cofactor.

Its subcellular location is the cytoplasm. It carries out the reaction O-phospho-L-serine + 2-oxoglutarate = 3-phosphooxypyruvate + L-glutamate. It catalyses the reaction 4-(phosphooxy)-L-threonine + 2-oxoglutarate = (R)-3-hydroxy-2-oxo-4-phosphooxybutanoate + L-glutamate. Its pathway is amino-acid biosynthesis; L-serine biosynthesis; L-serine from 3-phospho-D-glycerate: step 2/3. It participates in cofactor biosynthesis; pyridoxine 5'-phosphate biosynthesis; pyridoxine 5'-phosphate from D-erythrose 4-phosphate: step 3/5. Functionally, catalyzes the reversible conversion of 3-phosphohydroxypyruvate to phosphoserine and of 3-hydroxy-2-oxo-4-phosphonooxybutanoate to phosphohydroxythreonine. This Neisseria gonorrhoeae (strain ATCC 700825 / FA 1090) protein is Phosphoserine aminotransferase.